The sequence spans 485 residues: Adenosylhomocysteinase 2 (485 aa).

The substrate site is built by Thr64, Asp139, and Glu205. 206-208 (TTT) is a binding site for NAD(+). The substrate site is built by Lys235 and Asp239. Residues Asn240, 269 to 274 (GYGDVG), Glu292, Asn327, 348 to 350 (IGH), and Asn397 contribute to the NAD(+) site.

Belongs to the adenosylhomocysteinase family. Requires NAD(+) as cofactor.

The enzyme catalyses S-adenosyl-L-homocysteine + H2O = L-homocysteine + adenosine. It functions in the pathway amino-acid biosynthesis; L-homocysteine biosynthesis; L-homocysteine from S-adenosyl-L-homocysteine: step 1/1. Its function is as follows. Adenosylhomocysteine is a competitive inhibitor of S-adenosyl-L-methionine-dependent methyl transferase reactions; therefore adenosylhomocysteinase may play a key role in the control of methylations via regulation of the intracellular concentration of adenosylhomocysteine. This chain is Adenosylhomocysteinase 2 (SAHH2), found in Arabidopsis thaliana (Mouse-ear cress).